A 174-amino-acid polypeptide reads, in one-letter code: NADH-quinone oxidoreductase subunit B 1 (174 aa).

Residues cysteine 53, cysteine 54, cysteine 118, and cysteine 148 each coordinate [4Fe-4S] cluster.

This sequence belongs to the complex I 20 kDa subunit family. As to quaternary structure, NDH-1 is composed of 14 different subunits. Subunits NuoB, C, D, E, F, and G constitute the peripheral sector of the complex. [4Fe-4S] cluster serves as cofactor.

It localises to the cell inner membrane. The enzyme catalyses a quinone + NADH + 5 H(+)(in) = a quinol + NAD(+) + 4 H(+)(out). Functionally, NDH-1 shuttles electrons from NADH, via FMN and iron-sulfur (Fe-S) centers, to quinones in the respiratory chain. The immediate electron acceptor for the enzyme in this species is believed to be ubiquinone. Couples the redox reaction to proton translocation (for every two electrons transferred, four hydrogen ions are translocated across the cytoplasmic membrane), and thus conserves the redox energy in a proton gradient. This is NADH-quinone oxidoreductase subunit B 1 from Cereibacter sphaeroides (strain KD131 / KCTC 12085) (Rhodobacter sphaeroides).